The chain runs to 171 residues: Secretion monitor (171 aa).

Residues 1–30 (MIGILNRWRQFGRRYFWPHLLLGMVAASLG) form the signal peptide.

Belongs to the SecM family.

It is found in the cytoplasm. The protein resides in the cytosol. The protein localises to the periplasm. Regulates secA expression by translational coupling of the secM secA operon. Translational pausing at a specific Pro residue 5 residues before the end of the protein may allow disruption of a mRNA repressor helix that normally suppresses secA translation initiation. This chain is Secretion monitor, found in Pectobacterium atrosepticum (strain SCRI 1043 / ATCC BAA-672) (Erwinia carotovora subsp. atroseptica).